Reading from the N-terminus, the 89-residue chain is C-C motif chemokine 18 (89 aa).

A signal peptide spans 1 to 20; it reads MKGLAAALLVLVCTMALCSC. Cystine bridges form between cysteine 30–cysteine 54 and cysteine 31–cysteine 70.

This sequence belongs to the intercrine beta (chemokine CC) family. Post-translationally, the Cys-30/Cys-54 disulfide bond is required for activity. Expressed at high levels in lung, lymph nodes, placenta, bone marrow, dendritic cells present in germinal centers and T-cell areas of secondary lymphoid organs and macrophages derived from peripheral blood monocytes. Not expressed by peripheral blood monocytes and a monocyte-to-macrophage differentiation is a prerequisite for expression. Expressed in synovial fluids from patients with rheumatoid and septic arthritis and in ovarian carcinoma ascitic fluid.

It is found in the secreted. In terms of biological role, chemotactic factor that attracts lymphocytes but not monocytes or granulocytes. May be involved in B-cell migration into B-cell follicles in lymph nodes. Attracts naive T-lymphocytes toward dendritic cells and activated macrophages in lymph nodes, has chemotactic activity for naive T-cells, CD4+ and CD8+ T-cells and thus may play a role in both humoral and cell-mediated immunity responses. The protein is C-C motif chemokine 18 (CCL18) of Homo sapiens (Human).